The following is a 369-amino-acid chain: Chanoclavine-I aldehyde reductase fgaOx3 (369 aa).

FMN contacts are provided by residues 23 to 25 (PMT), A58, Q100, and H169. The substrate site is built by H169 and N172. Y174 serves as the catalytic Proton donor. Residues G292, 316 to 317 (GR), and R317 each bind FMN. Y344 lines the substrate pocket.

Belongs to the NADH:flavin oxidoreductase/NADH oxidase family. As to quaternary structure, monomer. Requires FMN as cofactor.

It carries out the reaction dihydrochanoclavine-I aldehyde + NADP(+) = chanoclavine-I aldehyde + NADPH + H(+). Its pathway is alkaloid biosynthesis; ergot alkaloid biosynthesis. In terms of biological role, chanoclavine-I aldehyde reductase; part of the gene cluster that mediates the biosynthesis of isofumigaclavines, fungal ergot alkaloids. The tryptophan dimethylallyltransferase ifgA catalyzes the first step of ergot alkaloid biosynthesis by condensing dimethylallyl diphosphate (DMAP) and tryptophan to form 4-dimethylallyl-L-tryptophan. The second step is catalyzed by the methyltransferase ifgB that methylates 4-dimethylallyl-L-tryptophan in the presence of S-adenosyl-L-methionine, resulting in the formation of N-methyl-dimethylallyl-L-tryptophan. The catalase ifgD and the FAD-dependent oxidoreductase ifgC then transform N-methyl-dimethylallyl-L-tryptophan to chanoclavine-I which is further oxidized by ifgE in the presence of NAD(+), resulting in the formation of chanoclavine-I aldehyde. The chanoclavine-I aldehyde reductases ifgG and/or fgaOx3 reduce chanoclavine-I aldehyde to dihydrochanoclavine-I aldehyde that spontaneously dehydrates to form 6,8-dimethyl-6,7-didehydroergoline. The festuclavine dehydrogenases ifgF1 and/or ifgF2 then catalyze the reduction of 6,8-dimethyl-6,7-didehydroergoline to form festuclavine. Hydrolysis of festuclavine by a yet undetermined cytochrome P450 monooxygenase (called ifgH) then leads to the formation of isofumigaclavine B which is in turn acetylated by ifgI to isofumigaclavine A. Penicillium roqueforti has interestingly at least two sets of genes for the consumption of chanoclavine-I aldehyde on three different loci, the OYEs ifgG/fgaOx3 and the festuclavine synthase homologs ifgF1/ifgF2. The reason for the duplication of these genes is unclear, probably to ensure the conversion of chanoclavine-I aldehyde by differential gene expression under various environmental conditions. The protein is Chanoclavine-I aldehyde reductase fgaOx3 of Penicillium roqueforti (strain FM164).